The following is a 900-amino-acid chain: Alanine--tRNA ligase (900 aa).

His587, His591, Cys691, and His695 together coordinate Zn(2+).

This sequence belongs to the class-II aminoacyl-tRNA synthetase family. It depends on Zn(2+) as a cofactor.

The protein resides in the cytoplasm. It catalyses the reaction tRNA(Ala) + L-alanine + ATP = L-alanyl-tRNA(Ala) + AMP + diphosphate. Functionally, catalyzes the attachment of alanine to tRNA(Ala) in a two-step reaction: alanine is first activated by ATP to form Ala-AMP and then transferred to the acceptor end of tRNA(Ala). Also edits incorrectly charged Ser-tRNA(Ala) and Gly-tRNA(Ala) via its editing domain. The polypeptide is Alanine--tRNA ligase (Aeropyrum pernix (strain ATCC 700893 / DSM 11879 / JCM 9820 / NBRC 100138 / K1)).